Here is a 1386-residue protein sequence, read N- to C-terminus: Putative ATP-dependent RNA helicase DHX57 (1386 aa).

The span at 1–11 shows a compositional bias: basic residues; it reads MSSSVRRKGKP. 2 disordered regions span residues 1–106 and 120–147; these read MSSS…MTSE and EQDA…NDER. Composition is skewed to gly residues over residues 12 to 23 and 35 to 50; these read GKGGGKGSSRGG and GSGG…GGGN. Residues 101-125 adopt a coiled-coil conformation; sequence LHMTSENQEKVKALLRDLQEQDADA. Residues serine 127 and serine 132 each carry the phosphoserine modification. Residues 133–143 are compositionally biased toward acidic residues; sequence GEEEDDEPDCC. The UBA domain maps to 180–220; sequence TVSPFAVQKLSRYGFNTERCQAVLRMCDGDVGASLEHLLTQ. The segment at 299–326 adopts a C3H1-type zinc-finger fold; sequence ENSLEICKFYLKGNCKFGSKCRFKHEVP. 3 positions are modified to phosphoserine: serine 475, serine 477, and serine 480. One can recognise a Helicase ATP-binding domain in the interval 554–721; sequence LNLLRKHQVV…FNSCPVITIP (168 aa). 567–574 contacts ATP; it reads GMTGCGKT. Positions 668 to 671 match the DEVH box motif; sequence DEVH. One can recognise a Helicase C-terminal domain in the interval 830-1010; the sequence is LIEALLEWIV…QLCLRIKILE (181 aa).

It belongs to the DEAD box helicase family. DEAH subfamily.

The enzyme catalyses ATP + H2O = ADP + phosphate + H(+). In terms of biological role, probable ATP-binding RNA helicase. The protein is Putative ATP-dependent RNA helicase DHX57 (DHX57) of Homo sapiens (Human).